We begin with the raw amino-acid sequence, 349 residues long: Palmitoyltransferase PFA5 (349 aa).

Helical transmembrane passes span 19–39 (LIPF…CHQF) and 57–77 (LIIV…LMLV). Residues 126–176 (IWCSNCQSLKMSRTHHSTKVGYCVPRFDHYCVWIGTVLGRLNYKLFVQFTF) enclose the DHHC domain. Catalysis depends on C156, which acts as the S-palmitoyl cysteine intermediate. 2 consecutive transmembrane segments (helical) span residues 170–190 (LFVQ…ISIA) and 204–224 (VYAV…LFLT).

Belongs to the DHHC palmitoyltransferase family. PFA5 subfamily.

It localises to the membrane. The catalysed reaction is L-cysteinyl-[protein] + hexadecanoyl-CoA = S-hexadecanoyl-L-cysteinyl-[protein] + CoA. The sequence is that of Palmitoyltransferase PFA5 (PFA5) from Kluyveromyces lactis (strain ATCC 8585 / CBS 2359 / DSM 70799 / NBRC 1267 / NRRL Y-1140 / WM37) (Yeast).